The following is a 578-amino-acid chain: Maltogenic alpha-amylase (578 aa).

It belongs to the glycosyl hydrolase 13 family.

The catalysed reaction is hydrolysis of (1-&gt;4)-alpha-D-glucosidic linkages in polysaccharides so as to remove successive alpha-maltose residues from the non-reducing ends of the chains.. Converts starch into maltose. In contrary to other maltogenic alpha-amylases BlmA cannot hydrolyze 1,4-alpha-glucosidic linkage next to 1,6-alpha-glucosidic linkages. The sequence is that of Maltogenic alpha-amylase (blmA) from Bacillus licheniformis.